A 260-amino-acid chain; its full sequence is 5'-nucleotidase SurE (260 aa).

Positions 8, 9, 43, and 96 each coordinate a divalent metal cation.

This sequence belongs to the SurE nucleotidase family. Requires a divalent metal cation as cofactor.

It is found in the cytoplasm. The enzyme catalyses a ribonucleoside 5'-phosphate + H2O = a ribonucleoside + phosphate. Nucleotidase that shows phosphatase activity on nucleoside 5'-monophosphates. The chain is 5'-nucleotidase SurE from Ruegeria pomeroyi (strain ATCC 700808 / DSM 15171 / DSS-3) (Silicibacter pomeroyi).